The chain runs to 227 residues: Sensory transduction protein RegX3 (227 aa).

Residues 3 to 116 (SVLIVEDEES…ELIARIRAVL (114 aa)) enclose the Response regulatory domain. D52 carries the post-translational modification 4-aspartylphosphate. The ompR/PhoB-type DNA-binding region spans 128-227 (DGVLESGPVR…VRGLGYKLEG (100 aa)).

Phosphorylated by SenX3.

Functionally, member of the two-component regulatory system SenX3/RegX3. Specifically binds to the promoter region of the senX3-regX3 operon. The protein is Sensory transduction protein RegX3 of Mycobacterium bovis (strain ATCC BAA-935 / AF2122/97).